A 205-amino-acid polypeptide reads, in one-letter code: 7-methyl-GTP pyrophosphatase (205 aa).

The active-site Proton acceptor is the Asp-79.

It belongs to the Maf family. YceF subfamily. Requires a divalent metal cation as cofactor.

The protein localises to the cytoplasm. It catalyses the reaction N(7)-methyl-GTP + H2O = N(7)-methyl-GMP + diphosphate + H(+). In terms of biological role, nucleoside triphosphate pyrophosphatase that hydrolyzes 7-methyl-GTP (m(7)GTP). May have a dual role in cell division arrest and in preventing the incorporation of modified nucleotides into cellular nucleic acids. The polypeptide is 7-methyl-GTP pyrophosphatase (Paraburkholderia xenovorans (strain LB400)).